The primary structure comprises 357 residues: MAEKESNGVRVCVTGGAGFIGSWLVRKLLEKGYTVHATLRNTGDEAKAGLLRRLVPGAAERLRLFQADLFDAATFAPAIAGCQFVFLVATPFGLDSAGSQYKSTAEAVVDAVHAILRQCEESRTVKRVIHTASVAAASPLLEEEVPASGVGYRDFIDESCWTSLNVDYPLRSAHFDKYILSKLQSEQELLSYNNGESPAFEVVTLPLGLVAGDTVLGRAPETVESAVAPVSRSEPYFGLLRILQQLLGSLPLVHVDDVCDALVFCMERRPSVAGRFLCAAAYPTIHDVVAHYASKFPHLDILKETTEAVATVRPARDRLGELGFKYKYGMEEILDSSVACAARLGSLDASKLGLQKG.

NADP(+)-binding positions include arginine 40, lysine 47, 68–69 (DL), 88–90 (VAT), tyrosine 178, lysine 182, 207–210 (LGLV), and threonine 222. Lysine 182 serves as the catalytic Proton donor.

The protein belongs to the NAD(P)-dependent epimerase/dehydratase family.

With respect to regulation, activity is sensitive to heat, dependent on NADPH, and inhibited by p-hydroxymercuribenzoate and disulfiram. In terms of biological role, in tandem with Hm2, NADPH-dependent Helminthosporium carbonum (HC) toxin reductase (HCTR), which inactivates HC toxin, a cyclic tetrapeptide produced by the fungus Cochliobolus carbonum to permit infection and acting as an inhibitor of host histone deacetylases (HDACs), thus conferring resistance against C.carbonum race 1 in resistant cultivars (e.g. cv. B73 and cv. Wisconsin 22). Catalyzes the production of 8-hydroxy derivative of HC-toxin via the reduction of the 8-keto group of 2-amino-9,10-epoxy-8-oxo-decanoic acid, an amino acid of the HC-toxin. The polypeptide is NADPH HC-toxin reductase 1 (Zea mays (Maize)).